The chain runs to 436 residues: UPF0597 protein YhaM (436 aa).

This sequence belongs to the UPF0597 family.

The chain is UPF0597 protein YhaM from Shigella dysenteriae serotype 1 (strain Sd197).